A 248-amino-acid chain; its full sequence is Triosephosphate isomerase (248 aa).

Substrate is bound at residue 9–11; it reads NWK. Residue H94 is the Electrophile of the active site. E166 serves as the catalytic Proton acceptor. Residues G172, S212, and 233 to 234 contribute to the substrate site; that span reads GG.

The protein belongs to the triosephosphate isomerase family. Homodimer.

It is found in the cytoplasm. It catalyses the reaction D-glyceraldehyde 3-phosphate = dihydroxyacetone phosphate. The protein operates within carbohydrate biosynthesis; gluconeogenesis. Its pathway is carbohydrate degradation; glycolysis; D-glyceraldehyde 3-phosphate from glycerone phosphate: step 1/1. Functionally, involved in the gluconeogenesis. Catalyzes stereospecifically the conversion of dihydroxyacetone phosphate (DHAP) to D-glyceraldehyde-3-phosphate (G3P). The sequence is that of Triosephosphate isomerase from Alkaliphilus metalliredigens (strain QYMF).